The sequence spans 432 residues: ATP-dependent RNA helicase RhlB (432 aa).

Residues 9–37 carry the Q motif motif; that stretch reads KKFSDFALHPKVIEALEKKGFSNCTQIQA. A Helicase ATP-binding domain is found at 40-219; it reads LPITVKGHDI…FEQMNNPEYV (180 aa). 53-60 serves as a coordination point for ATP; sequence AQTGTGKT. A DEAD box motif is present at residues 165 to 168; sequence DEAD. The 146-residue stretch at 245–390 folds into the Helicase C-terminal domain; that stretch reads RLLQTLIEEE…VSKYNSDALL (146 aa). The disordered stretch occupies residues 393–432; that stretch reads LPEPKRRHRPRQGQPRRNNSAPRRGNNTQRNNRNKRPSHS. Over residues 404 to 423 the composition is skewed to low complexity; that stretch reads QGQPRRNNSAPRRGNNTQRN.

It belongs to the DEAD box helicase family. RhlB subfamily. In terms of assembly, component of the RNA degradosome, which is a multiprotein complex involved in RNA processing and mRNA degradation.

Its subcellular location is the cytoplasm. The enzyme catalyses ATP + H2O = ADP + phosphate + H(+). DEAD-box RNA helicase involved in RNA degradation. Has RNA-dependent ATPase activity and unwinds double-stranded RNA. This chain is ATP-dependent RNA helicase RhlB, found in Proteus mirabilis (strain HI4320).